Reading from the N-terminus, the 342-residue chain is P21 prophage-derived major head protein (342 aa).

This sequence belongs to the lambda phage major capsid protein family.

The chain is P21 prophage-derived major head protein from Escherichia coli O6:H1 (strain CFT073 / ATCC 700928 / UPEC).